The chain runs to 625 residues: DNA mismatch repair protein MutL (625 aa).

Positions 404–427 (PPPRNAPQSTGMPSMAGTGLPATS) are disordered.

The protein belongs to the DNA mismatch repair MutL/HexB family.

Its function is as follows. This protein is involved in the repair of mismatches in DNA. It is required for dam-dependent methyl-directed DNA mismatch repair. May act as a 'molecular matchmaker', a protein that promotes the formation of a stable complex between two or more DNA-binding proteins in an ATP-dependent manner without itself being part of a final effector complex. The protein is DNA mismatch repair protein MutL of Xanthomonas oryzae pv. oryzae (strain MAFF 311018).